The following is a 136-amino-acid chain: Small ribosomal subunit protein uS9 (136 aa).

A disordered region spans residues Ser97–Arg136. Over residues Pro98–Ala116 the composition is skewed to basic and acidic residues. The segment covering Lys117–Arg136 has biased composition (basic residues).

This sequence belongs to the universal ribosomal protein uS9 family.

The sequence is that of Small ribosomal subunit protein uS9 from Prochlorococcus marinus (strain MIT 9312).